Consider the following 746-residue polypeptide: NAD(P)H-quinone oxidoreductase subunit 5, chloroplastic (746 aa).

The next 16 membrane-spanning stretches (helical) occupy residues 9–29 (WIIP…LLLF), 40–60 (WTFL…YLSI), 89–109 (IDPL…LVLI), 125–145 (FAYM…SNLI), 147–167 (VYFF…FWFT), 185–205 (GDFG…SFEF), 221–241 (VNLL…IAKS), 258–278 (TPIS…FLVA), 280–300 (LLPL…IGII), 327–347 (LGYM…FHLI), 354–374 (ALLF…VGYS), 396–416 (TAFL…CFWS), 425–445 (LLFS…TAFY), 547–567 (ILFP…IGIP), 608–628 (FSVS…KPFY), and 723–743 (YLFL…FFYF).

It belongs to the complex I subunit 5 family. NDH is composed of at least 16 different subunits, 5 of which are encoded in the nucleus.

The protein resides in the plastid. It is found in the chloroplast thylakoid membrane. It catalyses the reaction a plastoquinone + NADH + (n+1) H(+)(in) = a plastoquinol + NAD(+) + n H(+)(out). The enzyme catalyses a plastoquinone + NADPH + (n+1) H(+)(in) = a plastoquinol + NADP(+) + n H(+)(out). Functionally, NDH shuttles electrons from NAD(P)H:plastoquinone, via FMN and iron-sulfur (Fe-S) centers, to quinones in the photosynthetic chain and possibly in a chloroplast respiratory chain. The immediate electron acceptor for the enzyme in this species is believed to be plastoquinone. Couples the redox reaction to proton translocation, and thus conserves the redox energy in a proton gradient. This chain is NAD(P)H-quinone oxidoreductase subunit 5, chloroplastic (ndhF), found in Olimarabidopsis pumila (Dwarf rocket).